We begin with the raw amino-acid sequence, 749 residues long: Catalase-peroxidase (749 aa).

Positions Trp98–Tyr234 form a cross-link, tryptophyl-tyrosyl-methioninium (Trp-Tyr) (with M-260). His99 serves as the catalytic Proton acceptor. Positions Tyr234 to Met260 form a cross-link, tryptophyl-tyrosyl-methioninium (Tyr-Met) (with W-98). His275 contributes to the heme b binding site.

The protein belongs to the peroxidase family. Peroxidase/catalase subfamily. Homodimer or homotetramer. Requires heme b as cofactor. Post-translationally, formation of the three residue Trp-Tyr-Met cross-link is important for the catalase, but not the peroxidase activity of the enzyme.

It is found in the cytoplasm. The enzyme catalyses H2O2 + AH2 = A + 2 H2O. It catalyses the reaction 2 H2O2 = O2 + 2 H2O. Functionally, bifunctional enzyme with both catalase and broad-spectrum peroxidase activity. This Mycosarcoma maydis (Corn smut fungus) protein is Catalase-peroxidase.